We begin with the raw amino-acid sequence, 583 residues long: uncharacterized protein (583 aa).

This is an uncharacterized protein from Schizosaccharomyces pombe (strain 972 / ATCC 24843) (Fission yeast).